Here is a 181-residue protein sequence, read N- to C-terminus: Ribulose bisphosphate carboxylase small subunit, chloroplastic 2 (181 aa).

The N-terminal 57 residues, 1–57 (MAFLIMSSAAAVATGTNAAQASMIAPFTGLKSATSFPVSRKQNLDITSIASNGGRVQ), are a transit peptide targeting the chloroplast.

It belongs to the RuBisCO small chain family. In terms of assembly, heterohexadecamer of 8 large and 8 small subunits.

It localises to the plastid. It is found in the chloroplast. Its function is as follows. RuBisCO catalyzes two reactions: the carboxylation of D-ribulose 1,5-bisphosphate, the primary event in carbon dioxide fixation, as well as the oxidative fragmentation of the pentose substrate. Both reactions occur simultaneously and in competition at the same active site. Although the small subunit is not catalytic it is essential for maximal activity. This is Ribulose bisphosphate carboxylase small subunit, chloroplastic 2 from Nicotiana sylvestris (Wood tobacco).